Here is a 323-residue protein sequence, read N- to C-terminus: Di/tripeptide transport ATP-binding protein DppF (323 aa).

The region spanning 5–254 is the ABC transporter domain; the sequence is LTARDLTRHY…PLHPYTRALL (250 aa). 47–54 contacts ATP; it reads GESGCGKS.

The protein belongs to the ABC transporter superfamily. The complex is composed of two ATP-binding proteins (DppD and DppF), two transmembrane proteins (DppB and DppC) and a solute-binding protein (DppA1-A5). Five orthologous SBPs (DppA1-A5) are present in P.aeruginosa, which increases the substrate specificity of the DppBCDF transporter.

It is found in the cell inner membrane. The enzyme catalyses a dipeptide(out) + ATP + H2O = a dipeptide(in) + ADP + phosphate + H(+). Its function is as follows. Part of the ABC transporter DppABCDF involved in the uptake of various di/tripeptides. Is also involved in the uptake of phaseolotoxin, a toxic tripeptide inhibiting the enzyme ornithine carbamoyltransferase. Responsible for energy coupling to the transport system. The protein is Di/tripeptide transport ATP-binding protein DppF of Pseudomonas aeruginosa (strain UCBPP-PA14).